A 509-amino-acid polypeptide reads, in one-letter code: ATP synthase subunit alpha (509 aa).

An ATP-binding site is contributed by 169-176 (GDRQTGKT).

It belongs to the ATPase alpha/beta chains family. In terms of assembly, F-type ATPases have 2 components, CF(1) - the catalytic core - and CF(0) - the membrane proton channel. CF(1) has five subunits: alpha(3), beta(3), gamma(1), delta(1), epsilon(1). CF(0) has four main subunits: a(1), b(1), b'(1) and c(9-12).

It is found in the cell inner membrane. It carries out the reaction ATP + H2O + 4 H(+)(in) = ADP + phosphate + 5 H(+)(out). Produces ATP from ADP in the presence of a proton gradient across the membrane. The alpha chain is a regulatory subunit. This is ATP synthase subunit alpha from Bradyrhizobium sp. (strain BTAi1 / ATCC BAA-1182).